The sequence spans 300 residues: PAK4-inhibitor INKA2 (300 aa).

Disordered regions lie at residues 59-104 (GGTP…SSPK), 178-201 (LEKGGEKGETGGSIEPKGEKGQSR), and 230-288 (KEKP…LEPS). Over residues 60 to 73 (GTPTFSCPESSQEQ) the composition is skewed to polar residues. The segment covering 93–102 (SSSQPSFDSS) has biased composition (low complexity). The tract at residues 140-183 (EPDDWTSTLMSRGRNRQPLVLGDNVFADLVGNWLDLPELEKGGE) is inka box. Residues 246 to 256 (GRSKKVKKRSL) are compositionally biased toward basic residues.

It belongs to the INKA family. In terms of assembly, interacts with PAK4. Enriched in the nervous system.

Its subcellular location is the nucleus. Inhibitor of the serine/threonine-protein kinase PAK4. Acts by binding PAK4 in a substrate-like manner, inhibiting the protein kinase activity. This Mus musculus (Mouse) protein is PAK4-inhibitor INKA2.